The chain runs to 274 residues: Thymidylate synthase (274 aa).

DUMP is bound at residue R21. H51 provides a ligand contact to (6R)-5,10-methylene-5,6,7,8-tetrahydrofolate. 123 to 124 lines the dUMP pocket; it reads RR. C156 serves as the catalytic Nucleophile. Residues 176 to 179, N187, and 217 to 219 each bind dUMP; these read RSAD and HIY. D179 contributes to the (6R)-5,10-methylene-5,6,7,8-tetrahydrofolate binding site. (6R)-5,10-methylene-5,6,7,8-tetrahydrofolate is bound at residue A273.

The protein belongs to the thymidylate synthase family. Bacterial-type ThyA subfamily. In terms of assembly, homodimer.

It is found in the cytoplasm. The catalysed reaction is dUMP + (6R)-5,10-methylene-5,6,7,8-tetrahydrofolate = 7,8-dihydrofolate + dTMP. It functions in the pathway pyrimidine metabolism; dTTP biosynthesis. Its function is as follows. Catalyzes the reductive methylation of 2'-deoxyuridine-5'-monophosphate (dUMP) to 2'-deoxythymidine-5'-monophosphate (dTMP) while utilizing 5,10-methylenetetrahydrofolate (mTHF) as the methyl donor and reductant in the reaction, yielding dihydrofolate (DHF) as a by-product. This enzymatic reaction provides an intracellular de novo source of dTMP, an essential precursor for DNA biosynthesis. This chain is Thymidylate synthase, found in Flavobacterium psychrophilum (strain ATCC 49511 / DSM 21280 / CIP 103535 / JIP02/86).